The chain runs to 312 residues: Taste receptor type 2 member 9 (312 aa).

Over 1-9 (MPSAIEAIY) the chain is Extracellular. The chain crosses the membrane as a helical span at residues 10-32 (IILIAGELTIGIWGNGFIVLVNC). The Cytoplasmic portion of the chain corresponds to 33-52 (XDWLKRRDISLIDIILISLA). The chain crosses the membrane as a helical span at residues 53 to 72 (ISRICLLCVISLDGFFMLLF). The Extracellular portion of the chain corresponds to 73 to 86 (PGTYGNSVLVSIVN). The helical transmembrane segment at 87-109 (VVWTFANNSSLWFTSCLSIFYLL) threads the bilayer. Over 110-128 (KIANISHPFFFWLKLKINK) the chain is Cytoplasmic. Residues 129–146 (VMLAILLGSFLISLIISV) form a helical membrane-spanning segment. Residues 147-180 (XKNDDMWYHLFKVSXEENITWEFKVSKIPGTFKQ) are Extracellular-facing. The N-linked (GlcNAc...) asparagine glycan is linked to N164. A helical membrane pass occupies residues 181 to 203 (LTLNLGGRVPFILCLISFFLLLF). Over 204 to 234 (SLVRHTKQIQLHATGFRDPSTEAHMRAIKAV) the chain is Cytoplasmic. The chain crosses the membrane as a helical span at residues 235 to 257 (IIFLLLLIVYYPVFLVMTSSALI). Residues 258–261 (PQGK) are Extracellular-facing. Residues 262-284 (LVLMIGDIVTVIFPSSHSFILIM) form a helical membrane-spanning segment. The Cytoplasmic segment spans residues 285–312 (GNSKLREAFLKMLRFVKGFLRRRKPFVP).

The protein belongs to the G-protein coupled receptor T2R family.

It localises to the membrane. Gustducin-coupled receptor implicated in the perception of bitter compounds in the oral cavity and the gastrointestinal tract. Signals through PLCB2 and the calcium-regulated cation channel TRPM5. In Pan troglodytes (Chimpanzee), this protein is Taste receptor type 2 member 9 (TAS2R9).